A 324-amino-acid polypeptide reads, in one-letter code: Acetyl-coenzyme A carboxylase carboxyl transferase subunit alpha (324 aa).

A CoA carboxyltransferase C-terminal domain is found at 44–297 (LEERAKQLRY…KAALLRNLAE (254 aa)).

This sequence belongs to the AccA family. Acetyl-CoA carboxylase is a heterohexamer composed of biotin carboxyl carrier protein (AccB), biotin carboxylase (AccC) and two subunits each of ACCase subunit alpha (AccA) and ACCase subunit beta (AccD).

The protein resides in the cytoplasm. The catalysed reaction is N(6)-carboxybiotinyl-L-lysyl-[protein] + acetyl-CoA = N(6)-biotinyl-L-lysyl-[protein] + malonyl-CoA. Its pathway is lipid metabolism; malonyl-CoA biosynthesis; malonyl-CoA from acetyl-CoA: step 1/1. Functionally, component of the acetyl coenzyme A carboxylase (ACC) complex. First, biotin carboxylase catalyzes the carboxylation of biotin on its carrier protein (BCCP) and then the CO(2) group is transferred by the carboxyltransferase to acetyl-CoA to form malonyl-CoA. The chain is Acetyl-coenzyme A carboxylase carboxyl transferase subunit alpha from Thermosynechococcus vestitus (strain NIES-2133 / IAM M-273 / BP-1).